The sequence spans 941 residues: Isoleucine--tRNA ligase (941 aa).

Positions 59 to 69 (PYANGNIHIGH) match the 'HIGH' region motif. E562 is a binding site for L-isoleucyl-5'-AMP. Residues 603–607 (KMSKS) carry the 'KMSKS' region motif. Residue K606 coordinates ATP. Residues C904, C907, C924, and C927 each contribute to the Zn(2+) site.

This sequence belongs to the class-I aminoacyl-tRNA synthetase family. IleS type 1 subfamily. Monomer. Zn(2+) serves as cofactor.

The protein resides in the cytoplasm. The catalysed reaction is tRNA(Ile) + L-isoleucine + ATP = L-isoleucyl-tRNA(Ile) + AMP + diphosphate. Functionally, catalyzes the attachment of isoleucine to tRNA(Ile). As IleRS can inadvertently accommodate and process structurally similar amino acids such as valine, to avoid such errors it has two additional distinct tRNA(Ile)-dependent editing activities. One activity is designated as 'pretransfer' editing and involves the hydrolysis of activated Val-AMP. The other activity is designated 'posttransfer' editing and involves deacylation of mischarged Val-tRNA(Ile). The protein is Isoleucine--tRNA ligase of Haemophilus influenzae (strain PittEE).